A 205-amino-acid chain; its full sequence is Holliday junction branch migration complex subunit RuvA (205 aa).

The interval Met-1 to Lys-62 is domain I. The interval Thr-63–Leu-141 is domain II. Positions Phe-142 to Lys-152 are flexible linker. The tract at residues Gly-153–Arg-205 is domain III.

The protein belongs to the RuvA family. In terms of assembly, homotetramer. Forms an RuvA(8)-RuvB(12)-Holliday junction (HJ) complex. HJ DNA is sandwiched between 2 RuvA tetramers; dsDNA enters through RuvA and exits via RuvB. An RuvB hexamer assembles on each DNA strand where it exits the tetramer. Each RuvB hexamer is contacted by two RuvA subunits (via domain III) on 2 adjacent RuvB subunits; this complex drives branch migration. In the full resolvosome a probable DNA-RuvA(4)-RuvB(12)-RuvC(2) complex forms which resolves the HJ.

The protein resides in the cytoplasm. The RuvA-RuvB-RuvC complex processes Holliday junction (HJ) DNA during genetic recombination and DNA repair, while the RuvA-RuvB complex plays an important role in the rescue of blocked DNA replication forks via replication fork reversal (RFR). RuvA specifically binds to HJ cruciform DNA, conferring on it an open structure. The RuvB hexamer acts as an ATP-dependent pump, pulling dsDNA into and through the RuvAB complex. HJ branch migration allows RuvC to scan DNA until it finds its consensus sequence, where it cleaves and resolves the cruciform DNA. This Bacillus cytotoxicus (strain DSM 22905 / CIP 110041 / 391-98 / NVH 391-98) protein is Holliday junction branch migration complex subunit RuvA.